The primary structure comprises 608 residues: X-ray repair cross-complementing protein 6 (608 aa).

The span at 1–11 shows a compositional bias: basic and acidic residues; it reads MSEWESYYKTE. Residues 1-29 are disordered; that stretch reads MSEWESYYKTEGEEEEEEEESPDTGGEYK. Residue serine 2 is modified to N-acetylserine. A Phosphoserine modification is found at serine 2. At serine 6 the chain carries Phosphoserine; by PRKDC. Residues 12–22 are compositionally biased toward acidic residues; the sequence is GEEEEEEEESP. Residue lysine 29 is the Schiff-base intermediate with DNA; for 5'-deoxyribose-5-phosphate lyase activity of the active site. An N6-acetyllysine modification is found at lysine 29. Serine 49 carries the post-translational modification Phosphoserine; by PRKDC. Residues 259-466 enclose the Ku domain; it reads FKLGEDVVLM…IDKMKAIVQK (208 aa). A DNA-binding region spans residues 275–339; the sequence is VQKANKPFPV…EETEELKRFD (65 aa). A Glycyl lysine isopeptide (Lys-Gly) (interchain with G-Cter in SUMO2) cross-link involves residue lysine 315. Lysine 329, lysine 336, and lysine 459 each carry N6-acetyllysine. Positions 371 to 480 are interaction with XRCC5; it reads SLVSGSSTLF…YRSDSFENPV (110 aa). Residues serine 475, serine 518, and serine 548 each carry the phosphoserine modification. Positions 534 to 557 are disordered; it reads PEGKVAKRKQDDEGSTSKKPKVEL. Residues 537 to 557 are compositionally biased toward basic and acidic residues; the sequence is KVAKRKQDDEGSTSKKPKVEL. The segment at 548-607 is interaction with DEAF1; it reads STSKKPKVELSEEELKAHFRKGTLGKLTVPTLKDICKAHGLKSGPKKQELLDALIRHLEK. Lysine 554 is covalently cross-linked (Glycyl lysine isopeptide (Lys-Gly) (interchain with G-Cter in SUMO2)). Serine 558 carries the post-translational modification Phosphoserine. Lysine 568 carries the N6,N6,N6-trimethyllysine modification. In terms of domain architecture, SAP spans 571–605; the sequence is LGKLTVPTLKDICKAHGLKSGPKKQELLDALIRHL. The segment at 576-581 is interaction with BAX; it reads VPTLKD.

This sequence belongs to the ku70 family. In terms of assembly, heterodimer composed of XRCC5/Ku80 and XRCC6/Ku70. Component of the core long-range non-homologous end joining (NHEJ) complex (also named DNA-PK complex) composed of PRKDC, LIG4, XRCC4, XRCC6/Ku70, XRCC5/Ku86 and NHEJ1/XLF. Additional component of the NHEJ complex includes PAXX. Following autophosphorylation, PRKDC dissociates from DNA, leading to formation of the short-range NHEJ complex, composed of LIG4, XRCC4, XRCC6/Ku70, XRCC5/Ku86 and NHEJ1/XLF. The XRCC5-XRCC6 dimer also associates with NAA15, and this complex binds to the osteocalcin promoter and activates osteocalcin expression. In addition, XRCC6 interacts with the osteoblast-specific transcription factors MSX2, RUNX2 and DLX5. Interacts with ELF3. Interacts with ATP23. The XRCC5-XRRC6 dimer associates in a DNA-dependent manner with APEX1. Binds to CDK9. Identified in a complex with DEAF1 and XRCC5. Interacts with DEAF1 (via the SAND domain); the interaction is direct and may be inhibited by DNA-binding. Interacts with CLU. Interacts with NR4A3; the DNA-dependent protein kinase complex DNA-PK phosphorylates and activates NR4A3 and prevents NR4A3 ubiquitinylation and degradation. Interacts with CYREN (via KBM motif). Interacts (via N-terminus) with HSF1 (via N-terminus); this interaction is direct and prevents XRCC5/XRCC6 heterodimeric binding and non-homologous end joining (NHEJ) repair activities induced by ionizing radiation (IR). Part of the HDP-RNP complex composed of at least HEXIM1, PRKDC, XRCC5, XRCC6, paraspeckle proteins (SFPQ, NONO, PSPC1, RBM14, and MATR3) and NEAT1 RNA. Interacts with HMBOX1. Interacts with ATF7. Interacts with APLF (via KBM motif). Interacts with WRN (via KBM motif). The XRCC5-XRCC6 dimer associates with ALKBH2. Interacts with TPRN; TPRN interacts with a number of DNA damage response proteins, is recruited to sites of DNA damage and may play a role in DNA damage repair. When not acetylated, interacts with BAX. Interacts with ERCC6L2. In terms of processing, phosphorylation by PRKDC may enhance helicase activity. Phosphorylation of Ser-49 does not affect DNA repair. ADP-ribosylated by PARP3. Post-translationally, methylation by SETD4 leads to accumulation in the cytoplasm and is a prerequisite for acetylation, possibly due to the change of subcellular from the nucleus to the cytosol initiated by methylation, acetylation occurring in the cytosol. In terms of processing, acetylation can be catalyzed in vitro by CREBBP/CBP and KAT2B/PCAF.

The protein resides in the nucleus. It localises to the chromosome. Its subcellular location is the cytoplasm. Its function is as follows. Single-stranded DNA-dependent ATP-dependent helicase that plays a key role in DNA non-homologous end joining (NHEJ) by recruiting DNA-PK to DNA. Required for double-strand break repair and V(D)J recombination. Also has a role in chromosome translocation. Has a role in chromosome translocation. The DNA helicase II complex binds preferentially to fork-like ends of double-stranded DNA in a cell cycle-dependent manner. It works in the 3'-5' direction. During NHEJ, the XRCC5-XRRC6 dimer performs the recognition step: it recognizes and binds to the broken ends of the DNA and protects them from further resection. Binding to DNA may be mediated by XRCC6. The XRCC5-XRRC6 dimer acts as a regulatory subunit of the DNA-dependent protein kinase complex DNA-PK by increasing the affinity of the catalytic subunit PRKDC to DNA by 100-fold. The XRCC5-XRRC6 dimer is probably involved in stabilizing broken DNA ends and bringing them together. The assembly of the DNA-PK complex to DNA ends is required for the NHEJ ligation step. Probably also acts as a 5'-deoxyribose-5-phosphate lyase (5'-dRP lyase), by catalyzing the beta-elimination of the 5' deoxyribose-5-phosphate at an abasic site near double-strand breaks. 5'-dRP lyase activity allows to 'clean' the termini of abasic sites, a class of nucleotide damage commonly associated with strand breaks, before such broken ends can be joined. The XRCC5-XRRC6 dimer together with APEX1 acts as a negative regulator of transcription. In association with NAA15, the XRCC5-XRRC6 dimer binds to the osteocalcin promoter and activates osteocalcin expression. Plays a role in the regulation of DNA virus-mediated innate immune response by assembling into the HDP-RNP complex, a complex that serves as a platform for IRF3 phosphorylation and subsequent innate immune response activation through the cGAS-STING pathway. Negatively regulates apoptosis by interacting with BAX and sequestering it from the mitochondria. Might have deubiquitination activity, acting on BAX. The protein is X-ray repair cross-complementing protein 6 (Xrcc6) of Mus musculus (Mouse).